The chain runs to 191 residues: Protein GrpE (191 aa).

A disordered region spans residues 1–49; that stretch reads MSEEKQTAEQVEAAEQEEVTEQAEQAASQEQHEETAGQEEALQHQIDEL. The span at 12-21 shows a compositional bias: acidic residues; sequence EAAEQEEVTE. Basic and acidic residues predominate over residues 30 to 49; that stretch reads EQHEETAGQEEALQHQIDEL.

It belongs to the GrpE family. In terms of assembly, homodimer.

The protein resides in the cytoplasm. Functionally, participates actively in the response to hyperosmotic and heat shock by preventing the aggregation of stress-denatured proteins, in association with DnaK and GrpE. It is the nucleotide exchange factor for DnaK and may function as a thermosensor. Unfolded proteins bind initially to DnaJ; upon interaction with the DnaJ-bound protein, DnaK hydrolyzes its bound ATP, resulting in the formation of a stable complex. GrpE releases ADP from DnaK; ATP binding to DnaK triggers the release of the substrate protein, thus completing the reaction cycle. Several rounds of ATP-dependent interactions between DnaJ, DnaK and GrpE are required for fully efficient folding. This is Protein GrpE from Bacillus velezensis (strain DSM 23117 / BGSC 10A6 / LMG 26770 / FZB42) (Bacillus amyloliquefaciens subsp. plantarum).